The sequence spans 245 residues: Large ribosomal subunit protein uL2 (245 aa).

Positions 198–245 are disordered; that stretch reads VSHPHGGGSHKRPGKPTTVARTAPPGQKVGHIAARKTGRAKRRAATKR. Positions 230–245 are enriched in basic residues; the sequence is AARKTGRAKRRAATKR.

This sequence belongs to the universal ribosomal protein uL2 family. Part of the 50S ribosomal subunit. Forms a bridge to the 30S subunit in the 70S ribosome.

In terms of biological role, one of the primary rRNA binding proteins. Required for association of the 30S and 50S subunits to form the 70S ribosome, for tRNA binding and peptide bond formation. It has been suggested to have peptidyltransferase activity; this is somewhat controversial. Makes several contacts with the 16S rRNA in the 70S ribosome. The sequence is that of Large ribosomal subunit protein uL2 from Korarchaeum cryptofilum (strain OPF8).